A 231-amino-acid polypeptide reads, in one-letter code: MAEPISLLLVDDEPGVRESVQAFLEDSGDFKVDLAANATEAWDYLQHHLPALVISDIMMPQVDGYQFLQKLREDARFQSLPVVFLTARGMTGDRIQGYQTGCDAFLSKPFDPDELEAIVRNLLARQQASSDAGSESAKLQEIYQEIRALKEQIGQPSGIHTTPSPIKLDFTPREQSVLDLVSQGLMNKEIAAQLKTSVRNVEKYVSRLFTKTGTNSRTELVRFALQHGLTE.

In terms of domain architecture, Response regulatory spans 6 to 123; sequence SLLLVDDEPG…ELEAIVRNLL (118 aa). 4-aspartylphosphate is present on Asp56. The HTH luxR-type domain occupies 163-228; that stretch reads PSPIKLDFTP…ELVRFALQHG (66 aa). Positions 187 to 206 form a DNA-binding region, H-T-H motif; it reads NKEIAAQLKTSVRNVEKYVS.

In terms of assembly, interacts with histidine kinase Hik2; may accept phosphate from Hik2.

In terms of biological role, member of at least 2 two-component regulatory systems Hik2/Rre1 and Hik34/Rre1. Responds to hyperosmotic stress, regulates expression of at least 24 genes including dnaK2 and hspA with Hik34 and sigB (sll0306), sll0528, slr1119, slr0852 and ssr3188 with Hik2. Responds to salt stress, regulates expression of at least 24 genes including adhA, dnaK2 and hspA with Hik34. Binds the adhA promoter. Phosphorylated by Hik2 in vitro. Phosphorylated protein has 10-fold higher affinity for DNA than unphosphorylated protein. This is Response regulator Rre1 from Synechocystis sp. (strain ATCC 27184 / PCC 6803 / Kazusa).